Reading from the N-terminus, the 338-residue chain is Transferrin receptor subunit ESAG7 (338 aa).

A signal peptide spans 1–17 (MRFWFVLLALLGKEIYA). 2 N-linked (GlcNAc...) asparagine glycosylation sites follow: asparagine 26 and asparagine 110. Cystine bridges form between cysteine 34-cysteine 161, cysteine 84-cysteine 311, cysteine 144-cysteine 215, and cysteine 230-cysteine 247. Asparagine 234 carries N-linked (GlcNAc...) asparagine glycosylation.

As to quaternary structure, heterodimer composed of ESAG6 and ESAG7. In terms of processing, N-glycosylated. Glycosylation is dispensable for heterodimer formation and host transferrin binding.

It is found in the cell membrane. The protein resides in the flagellar pocket. Transferrin receptor subunit involved in receptor-mediated acquisition of iron from the environment by binding host TF/transferrin. This is Transferrin receptor subunit ESAG7 from Trypanosoma brucei brucei.